The chain runs to 231 residues: Large ribosomal subunit protein uL1 (231 aa).

The protein belongs to the universal ribosomal protein uL1 family. As to quaternary structure, part of the 50S ribosomal subunit.

In terms of biological role, binds directly to 23S rRNA. The L1 stalk is quite mobile in the ribosome, and is involved in E site tRNA release. Functionally, protein L1 is also a translational repressor protein, it controls the translation of the L11 operon by binding to its mRNA. The polypeptide is Large ribosomal subunit protein uL1 (Mycoplasmopsis synoviae (strain 53) (Mycoplasma synoviae)).